Here is a 250-residue protein sequence, read N- to C-terminus: MEVERDQHISPPSLMAKTIPIIDLSNLDEELVAHAVVKGSEEWGIFHVVNHGIPMDLIQRLKDVGTQFFELPETEKKAVAKQDGSKDFEGYTTNLKYVKGEVWTENLFHRIWPPTCINFDYWPKNPPQYREVIEEYTKETKKLSERILGYLSEGLGLPSEALIQGLGGESTEYVMRINNYPPDPKPDLTLGVPEHTDIIGITIIITNEVPGLQIFKDDHWLDVHYIPSSITVNIGDQIMAEQWKVQECVA.

In terms of domain architecture, Fe2OG dioxygenase spans 171–250 (TEYVMRINNY…EQWKVQECVA (80 aa)). Residues His195 and Asp197 each coordinate Fe cation.

The protein belongs to the iron/ascorbate-dependent oxidoreductase family.

This is Putative inactive flavonol synthase 2 (FLS2) from Arabidopsis thaliana (Mouse-ear cress).